The following is a 259-amino-acid chain: Adenosylcobinamide-GDP ribazoletransferase (259 aa).

Helical transmembrane passes span 9 to 29, 43 to 63, 64 to 84, 118 to 138, 143 to 163, and 196 to 216; these read NLFFIAMGFFTRIPMPKWIEV, LVGLLVGAISAAVYSLMLYWV, SPSVAIVFAMITSVLVTGGFH, ALALVLALLLKWQLLTELALF, VSLALIVGHCLSRVVAASFIF, and VLALLLVGLVPALVLITGLVI.

This sequence belongs to the CobS family. Mg(2+) serves as cofactor.

It localises to the cell inner membrane. It carries out the reaction alpha-ribazole + adenosylcob(III)inamide-GDP = adenosylcob(III)alamin + GMP + H(+). The enzyme catalyses alpha-ribazole 5'-phosphate + adenosylcob(III)inamide-GDP = adenosylcob(III)alamin 5'-phosphate + GMP + H(+). It participates in cofactor biosynthesis; adenosylcobalamin biosynthesis; adenosylcobalamin from cob(II)yrinate a,c-diamide: step 7/7. Joins adenosylcobinamide-GDP and alpha-ribazole to generate adenosylcobalamin (Ado-cobalamin). Also synthesizes adenosylcobalamin 5'-phosphate from adenosylcobinamide-GDP and alpha-ribazole 5'-phosphate. The chain is Adenosylcobinamide-GDP ribazoletransferase from Shewanella halifaxensis (strain HAW-EB4).